The chain runs to 347 residues: Metacaspase-2 (347 aa).

The interval 1-70 (MCSLITQLCD…QPWVATPLPG (70 aa)) is regulates substrate access to the active site. The active site involves His-158. The Ca(2+) site is built by Asp-173, Asp-189, and Asp-190. The active site involves Cys-213. Position 220 (Asp-220) interacts with Ca(2+).

This sequence belongs to the peptidase C14B family. In terms of assembly, monomer. In terms of processing, auto-proteolytic cleavage of the propeptide after Lys-55 and between the large and small subunits after Lys-268 is required for catalytic activity towards large protein substrates but is dispensable towards small oligopeptide substrates. After processing, the propeptide and the large and small subunits remain associated by non-covalent bonds. In vivo, the unprocessed enzyme appears to be the predominant form.

It localises to the recycling endosome. Its activity is regulated as follows. Activated by Ca(2+). In response to calcium binding, the 280-loop, the 280-loop, a disordered loop consisting of residues 269-275, undergoes a conformational change which stabilizes substrates in the active site. The binding to the substrate triggers the release of the N-terminal region resulting in the activation of the enzyme. Proteolytic cleavage is required for catalytic activity towards large protein substrates. In terms of biological role, cysteine protease that cleaves specifically after arginine or lysine residues. The sequence is that of Metacaspase-2 from Trypanosoma brucei brucei.